We begin with the raw amino-acid sequence, 3412 residues long: Genome polyprotein (3412 aa).

The Cytoplasmic portion of the chain corresponds to 1–104 (MSGRKAQGKT…LSSRKRRSSE (104 aa)). Residues 38 to 72 (PGPSRGVQGFIFFFLFNILTGKKLTTHLKRLWRML) are hydrophobic; homodimerization of capsid protein C. A propeptide spans 102 to 121 (SSEMTMMPLLILSMVILGGG) (ER anchor for the capsid protein C, removed in mature form by serine protease NS3). A helical transmembrane segment spans residues 105–125 (MTMMPLLILSMVILGGGVTLV). The Extracellular portion of the chain corresponds to 126–244 (RKNRWLLLNV…GERQLQKIER (119 aa)). 2 N-linked (GlcNAc...) asparagine; by host glycosylation sites follow: N134 and N150. A helical transmembrane segment spans residues 245 to 265 (WLVRNPFFAVTALAIAYLVGN). The Cytoplasmic portion of the chain corresponds to 266-270 (NKTQR). The chain crosses the membrane as a helical span at residues 271-285 (VVIALLVLAVGPAYS). The Extracellular segment spans residues 286–730 (AHCIGITDRD…TVFGSAFQGL (445 aa)). 8 disulfides stabilise this stretch: C288/C315, C345/C401, C345/C406, C359/C390, C377/C401, C377/C406, C467/C568, and C585/C615. The interval 383–396 (DRGWGNGCGLFGKG) is fusion peptide. Residues 731–751 (FGGLSWITKVIMGAVLIWVGI) traverse the membrane as a helical segment. Residues 752 to 757 (NTRNMT) are Extracellular-facing. Residues 758-778 (MSMSMILVGVIMMFLSLGVGA) form a helical membrane-spanning segment. At 779–1132 (DQGCAVNFGK…LVRSWVTAGE (354 aa)) the chain is on the extracellular side. Intrachain disulfides connect C782–C793, C833–C921, C957–C1002, C1058–C1107, C1069–C1091, and C1090–C1094. N-linked (GlcNAc...) asparagine; by host glycans are attached at residues N908 and N986. The helical transmembrane segment at 1133-1153 (VHAVPFGLVSMMIAMEVVLRK) threads the bilayer. Residues 1154–1201 (RQGPKQMLVGGIILLGAMLVGQVTMLDLVKLIVAVGLHFHEINNGGDA) lie on the Cytoplasmic side of the membrane. Residues 1202-1222 (MYMALIASFSIRPGLLIGFGL) form a helical membrane-spanning segment. Residues 1223–1287 (RTLWSPRERL…ILPLMALLTP (65 aa)) lie on the Lumenal side of the membrane. The chain crosses the membrane as a helical span at residues 1288-1308 (VTMYEVRMATMLFCTVVIVGV). The Cytoplasmic portion of the chain corresponds to 1309–1355 (LHQNSKDTSMQKTIPIVALTLTSYMGLTQPFLGLCAYMSTQVFGRRS). Residues 1356–1376 (IPVNEALAAAGLVGVLAGLAF) traverse the membrane as a helical segment. The Lumenal portion of the chain corresponds to 1377–1378 (QD). The helical transmembrane segment at 1379–1399 (MENFLGPIAVGGILMMLVSVA) threads the bilayer. Topologically, residues 1400–1456 (GKVDGLELKKLGEVSWEEEAEISGSSSRYDVALSEQGEFKLLSEDKVPWDQIVMTSL) are cytoplasmic. The interacts with and activates NS3 protease stretch occupies residues 1407–1446 (LKKLGEVSWEEEAEISGSSSRYDVALSEQGEFKLLSEDKV). Positions 1457–1477 (ALVGAAIHPFALLLVLGGWVL) form an intramembrane region, helical. Residues 1478–2157 (HIKGARRSGD…RNALSMMPEA (680 aa)) lie on the Cytoplasmic side of the membrane. One can recognise a Peptidase S7 domain in the interval 1485 to 1665 (SGDVLWDIPT…EVKEESKEEL (181 aa)). Residues H1537, D1561, and S1622 each act as charge relay system; for serine protease NS3 activity in the active site. The Helicase ATP-binding domain maps to 1669 to 1825 (PTMLKKGMTT…HSNGEIEDVQ (157 aa)). Positions 1673–1676 (KKGM) are important for RNA-binding. Residue 1682-1689 (FHPGAGKT) coordinates ATP. Positions 1773–1776 (DEAH) match the DEAH box motif. Positions 1820 to 1997 (EIEDVQTDIP…VRGGMVAPLY (178 aa)) constitute a Helicase C-terminal domain. The residue at position 1877 (K1877) is an N6-acetyllysine; by host. The tract at residues 1942–1961 (AAQRRGRIGRNPNRDGDSYY) is disordered. A helical membrane pass occupies residues 2158-2178 (MTIVMLFILAGLLTSGMVIFF). At 2179 to 2186 (MSPKGMSR) the chain is on the lumenal side. The segment at residues 2187–2207 (MSMAMGTMAGSGYLMFLGGVK) is an intramembrane region (helical). The Lumenal portion of the chain corresponds to 2208–2209 (PT). Residues 2210–2230 (HISYVMLIFFVLMVVIIPEPG) traverse the membrane as a helical segment. The Cytoplasmic segment spans residues 2231 to 2241 (QQRSIQDNQVA). The helical transmembrane segment at 2242 to 2262 (YLIIGILTLLSVVAANELGML) threads the bilayer. Over 2263 to 2293 (EKTKEDFFGKRNIATSGGTIPWSWPDLDLKP) the chain is Lumenal. An intramembrane region (helical) is located at residues 2294–2314 (GAAWTVYVGIVTMLSPMLHHW). The Lumenal segment spans residues 2315 to 2360 (IKVEYGNLSLSGIAQSASVLSFMDKGVPFMKMNISVVILLVSGWNS). Residues 2361–2380 (ITVIPLLCGVGGAMLHWTLI) form a helical membrane-spanning segment. Topologically, residues 2381–2421 (LPGIKAQQSKLAQKRVFHGVAKNPVVDGNPTADIEEAPEMP) are cytoplasmic. Residues 2422–2442 (ALYEKKLALYLLLALSLMSVA) form a helical membrane-spanning segment. Topologically, residues 2443–2445 (MCR) are lumenal. The helical transmembrane segment at 2446–2466 (TPFSLAEGIVLSSAALGPLIE) threads the bilayer. The Cytoplasmic segment spans residues 2467-3411 (GNTSLLWNGP…VDADLQPGEL (945 aa)). Residues 2508-2772 (GSANGKTLGE…DVILPIGTRS (265 aa)) enclose the mRNA cap 0-1 NS5-type MT domain. Residue S2563 participates in S-adenosyl-L-methionine binding. S2563 carries the phosphoserine modification. K2568 functions as the For 2'-O-MTase activity in the catalytic mechanism. Residues G2593, W2594, T2611, L2612, D2638, and I2639 each coordinate S-adenosyl-L-methionine. The active-site For 2'-O-MTase activity is D2653. I2654 is an S-adenosyl-L-methionine binding site. Catalysis depends on for 2'-O-MTase activity residues K2689 and E2725. Y2727 is a binding site for S-adenosyl-L-methionine. Residues 2879 to 2912 (RKIMRVVNRWLFRHLAREKKPRLCTKEEFIAKVR) carry the Nuclear localization signal motif. Zn(2+)-binding residues include E2946, H2950, C2955, and C2958. One can recognise a RdRp catalytic domain in the interval 3036 to 3188 (GGFYADDTAG…KPVDDRFGLA (153 aa)). 3 residues coordinate Zn(2+): H3223, C3239, and C3358.

In the N-terminal section; belongs to the class I-like SAM-binding methyltransferase superfamily. mRNA cap 0-1 NS5-type methyltransferase family. As to quaternary structure, homodimer. Interacts (via N-terminus) with host EXOC1 (via C-terminus); this interaction results in EXOC1 degradation through the proteasome degradation pathway. In terms of assembly, forms heterodimers with envelope protein E in the endoplasmic reticulum and Golgi. Homodimer; in the endoplasmic reticulum and Golgi. Interacts with protein prM. Interacts with non-structural protein 1. As to quaternary structure, homodimer; Homohexamer when secreted. Interacts with envelope protein E. In terms of assembly, interacts (via N-terminus) with serine protease NS3. Forms a heterodimer with serine protease NS3. May form homooligomers. As to quaternary structure, forms a heterodimer with NS2B. Interacts with non-structural protein 2A (via N-terminus). Interacts with NS4B. Interacts with unphosphorylated RNA-directed RNA polymerase NS5; this interaction stimulates RNA-directed RNA polymerase NS5 guanylyltransferase activity. NS3 interacts with host PDCD6IP; this interaction contributes to virion release. In terms of assembly, interacts with serine protease NS3. Homodimer. Interacts with host STAT2; this interaction prevents the establishment of cellular antiviral state. Interacts with serine protease NS3. Interacts with host TRIM23; this interaction leads to NS5 ubiquitination. Post-translationally, specific enzymatic cleavages in vivo yield mature proteins. The nascent capsid protein C contains a C-terminal hydrophobic domain that act as a signal sequence for translocation of prM into the lumen of the ER. Mature capsid protein C is cleaved at a site upstream of this hydrophobic domain by NS3. prM is cleaved in post-Golgi vesicles by a host furin, releasing the mature small envelope protein M, and peptide pr. Non-structural protein 2A-alpha, a C-terminally truncated form of non-structural protein 2A, results from partial cleavage by NS3. Specific enzymatic cleavages in vivo yield mature proteins peptide 2K acts as a signal sequence and is removed from the N-terminus of NS4B by the host signal peptidase in the ER lumen. Signal cleavage at the 2K-4B site requires a prior NS3 protease-mediated cleavage at the 4A-2K site. In terms of processing, cleaved in post-Golgi vesicles by a host furin, releasing the mature small envelope protein M, and peptide pr. This cleavage is incomplete as up to 30% of viral particles still carry uncleaved prM. N-glycosylated. Post-translationally, N-glycosylated. The excreted form is glycosylated and this is required for efficient secretion of the protein from infected cells. In terms of processing, polyubiquitinated; ubiquitination is probably mediated by host TRIM23 and is prerequisite for NS5-STAT2 interaction. NS5 is not ISGylated or sumoylated. Acetylated by host KAT5. Acetylation modulates NS3 RNA-binding and unwinding activities and plays an important positive role for viral replication. Post-translationally, phosphorylated on serines residues. This phosphorylation may trigger NS5 nuclear localization.

Its subcellular location is the virion. The protein localises to the host nucleus. It localises to the host cytoplasm. The protein resides in the host perinuclear region. It is found in the secreted. Its subcellular location is the virion membrane. The protein localises to the host endoplasmic reticulum membrane. It catalyses the reaction Selective hydrolysis of -Xaa-Xaa-|-Yaa- bonds in which each of the Xaa can be either Arg or Lys and Yaa can be either Ser or Ala.. The catalysed reaction is RNA(n) + a ribonucleoside 5'-triphosphate = RNA(n+1) + diphosphate. The enzyme catalyses a ribonucleoside 5'-triphosphate + H2O = a ribonucleoside 5'-diphosphate + phosphate + H(+). It carries out the reaction ATP + H2O = ADP + phosphate + H(+). It catalyses the reaction a 5'-end (5'-triphosphoguanosine)-ribonucleoside in mRNA + S-adenosyl-L-methionine = a 5'-end (N(7)-methyl 5'-triphosphoguanosine)-ribonucleoside in mRNA + S-adenosyl-L-homocysteine. The catalysed reaction is a 5'-end (N(7)-methyl 5'-triphosphoguanosine)-ribonucleoside in mRNA + S-adenosyl-L-methionine = a 5'-end (N(7)-methyl 5'-triphosphoguanosine)-(2'-O-methyl-ribonucleoside) in mRNA + S-adenosyl-L-homocysteine + H(+). In terms of biological role, plays a role in virus budding by binding to the cell membrane and gathering the viral RNA into a nucleocapsid that forms the core of a mature virus particle. During virus entry, may induce genome penetration into the host cytoplasm after hemifusion induced by the surface proteins. Can migrate to the cell nucleus where it modulates host functions. Functionally, inhibits RNA silencing by interfering with host Dicer. Prevents premature fusion activity of envelope proteins in trans-Golgi by binding to envelope protein E at pH6.0. After virion release in extracellular space, gets dissociated from E dimers. Its function is as follows. Acts as a chaperone for envelope protein E during intracellular virion assembly by masking and inactivating envelope protein E fusion peptide. prM is the only viral peptide matured by host furin in the trans-Golgi network probably to avoid catastrophic activation of the viral fusion activity in acidic Golgi compartment prior to virion release. prM-E cleavage is inefficient, and many virions are only partially matured. These uncleaved prM would play a role in immune evasion. In terms of biological role, may play a role in virus budding. Exerts cytotoxic effects by activating a mitochondrial apoptotic pathway through M ectodomain. May display a viroporin activity. Functionally, binds to host cell surface receptor and mediates fusion between viral and cellular membranes. Envelope protein is synthesized in the endoplasmic reticulum in the form of heterodimer with protein prM. They play a role in virion budding in the ER, and the newly formed immature particle is covered with 60 spikes composed of heterodimer between precursor prM and envelope protein E. The virion is transported to the Golgi apparatus where the low pH causes dissociation of PrM-E heterodimers and formation of E homodimers. prM-E cleavage is inefficient, and many virions are only partially matured. These uncleaved prM would play a role in immune evasion. Involved in immune evasion, pathogenesis and viral replication. Once cleaved off the polyprotein, is targeted to three destinations: the viral replication cycle, the plasma membrane and the extracellular compartment. Essential for viral replication. Required for formation of the replication complex and recruitment of other non-structural proteins to the ER-derived membrane structures. Excreted as a hexameric lipoparticle that plays a role against host immune response. Antagonizing the complement function. Binds to the host macrophages and dendritic cells. Inhibits signal transduction originating from Toll-like receptor 3 (TLR3). Its function is as follows. Component of the viral RNA replication complex that functions in virion assembly and antagonizes the host immune response. In terms of biological role, required cofactor for the serine protease function of NS3. May have membrane-destabilizing activity and form viroporins. Functionally, displays three enzymatic activities: serine protease, NTPase and RNA helicase. NS3 serine protease, in association with NS2B, performs its autocleavage and cleaves the polyprotein at dibasic sites in the cytoplasm: C-prM, NS2A-NS2B, NS2B-NS3, NS3-NS4A, NS4A-2K and NS4B-NS5. NS3 RNA helicase binds RNA and unwinds dsRNA in the 3' to 5' direction. Also plays a role in virus assembly. Regulates the ATPase activity of the NS3 helicase activity. NS4A allows NS3 helicase to conserve energy during unwinding. Its function is as follows. Functions as a signal peptide for NS4B and is required for the interferon antagonism activity of the latter. In terms of biological role, induces the formation of ER-derived membrane vesicles where the viral replication takes place. Inhibits interferon (IFN)-induced host STAT1 phosphorylation and nuclear translocation, thereby preventing the establishment of cellular antiviral state by blocking the IFN-alpha/beta pathway. Functionally, replicates the viral (+) and (-) RNA genome, and performs the capping of genomes in the cytoplasm. NS5 methylates viral RNA cap at guanine N-7 and ribose 2'-O positions. Besides its role in RNA genome replication, also prevents the establishment of cellular antiviral state by blocking the interferon-alpha/beta (IFN-alpha/beta) signaling pathway. IFN-I induces binding of NS5 to host IFN-activated transcription factor STAT2, preventing its transcriptional activity. Host TRIM23 is the E3 ligase that interacts with and polyubiquitinates NS5 to promote its binding to STAT2 and trigger IFN-I signaling inhibition. In Yellow fever virus (isolate Uganda/A7094A4/1948) (YFV), this protein is Genome polyprotein.